The sequence spans 426 residues: Serine--tRNA ligase (426 aa).

Residue 231–233 (TSE) coordinates L-serine. 262–264 (RSE) provides a ligand contact to ATP. Glutamate 285 contacts L-serine. 349–352 (EISS) is an ATP binding site. L-serine is bound at residue serine 385.

This sequence belongs to the class-II aminoacyl-tRNA synthetase family. Type-1 seryl-tRNA synthetase subfamily. In terms of assembly, homodimer. The tRNA molecule binds across the dimer.

The protein resides in the cytoplasm. It catalyses the reaction tRNA(Ser) + L-serine + ATP = L-seryl-tRNA(Ser) + AMP + diphosphate + H(+). The enzyme catalyses tRNA(Sec) + L-serine + ATP = L-seryl-tRNA(Sec) + AMP + diphosphate + H(+). It participates in aminoacyl-tRNA biosynthesis; selenocysteinyl-tRNA(Sec) biosynthesis; L-seryl-tRNA(Sec) from L-serine and tRNA(Sec): step 1/1. Catalyzes the attachment of serine to tRNA(Ser). Is also able to aminoacylate tRNA(Sec) with serine, to form the misacylated tRNA L-seryl-tRNA(Sec), which will be further converted into selenocysteinyl-tRNA(Sec). The protein is Serine--tRNA ligase of Legionella pneumophila subsp. pneumophila (strain Philadelphia 1 / ATCC 33152 / DSM 7513).